The following is a 365-amino-acid chain: MPLSHRQTLTRYLIEERRRFPEASGELNALILDVALACKALARVVSFGELGDALSDGSAAPTGGGINVQGEVQKPLDVQSNEMFIRMNEWNGQLAGMASEEMEEPYLIPSSYPRGKYLLVFDPLDGSSNIDVNVSIGSIFSILRAPADVVASGRDVTEADFLQPGAAQVAAGYTIYGPTTQLVLTVGNGVAAFTLDPNLGEFLLTRSDIRVPEQTQEFAINSSNSRFWEPPVKRYVDECLAGKTGPRGKDFNMRWVASMVAEAHRILMRGGVFMYPRDTKDPAKPGRLRLLYEANPVAMLMEQAGGRASTGREPILGVSPTALHQRIGLIFGSKDEVERIERYHQEPASNEAAAPLFAERSLFRD.

Mg(2+)-binding residues include E100, D122, L124, and D125. Residues 125-128 (DGSS) and N221 each bind substrate. E293 serves as a coordination point for Mg(2+).

This sequence belongs to the FBPase class 1 family. In terms of assembly, homotetramer. Requires Mg(2+) as cofactor.

The protein resides in the cytoplasm. The enzyme catalyses beta-D-fructose 1,6-bisphosphate + H2O = beta-D-fructose 6-phosphate + phosphate. It participates in carbohydrate biosynthesis; gluconeogenesis. This chain is Fructose-1,6-bisphosphatase class 1 2, found in Cupriavidus metallidurans (strain ATCC 43123 / DSM 2839 / NBRC 102507 / CH34) (Ralstonia metallidurans).